The primary structure comprises 478 residues: MAPNAADKCPVMGNSGEKCPVMSSSTQSRGPRDIYTLEALSHFNREKIPERAVHAKGTGAYGEFEVTADISDICNIDMLLGVGKKTQCVTRFSTTGLERGSSDGVRDLKGMAVKFFTEQGDWDWVSLNFPFFFIRDPAKFPDMIHSQRRDPQTNLLNPNMTWDFVTKNPEALHMTLLQHSDFGTMFTWRTLSSYVGHAFKWVMPDGSFKYVHFFLASDRGPNFTDGSTAKVDPNDPDFATKDLFEAIERGDYPSWTANVQVVDPKDAPKLGFNILDLTKHWNLGTYPKGLDTIPSRPFGKLTLNRNVKDYFSEVEKLAFSPSNLVPGVEPSEDPILQARMFAYPDAQRYRLGIDHLKAPLRRKETACQHDLGPEFEKWLSQVTSEAWSHPHEDDYKFAREYYEVLPEFRSQEFQDRMVENLCKSIAPGPEELRKRVYDTFELVSSELARRLREGAEAIVAEKARPDSPSRAQPGQLRL.

Residue H54 is part of the active site. Residue Y343 coordinates heme. The tract at residues 459-478 (VAEKARPDSPSRAQPGQLRL) is disordered.

Belongs to the catalase family. The cofactor is heme.

It functions in the pathway alkaloid biosynthesis; ergot alkaloid biosynthesis. Its function is as follows. Catalase; part of the gene cluster that mediates the biosynthesis of fungal ergot alkaloid. DmaW catalyzes the first step of ergot alkaloid biosynthesis by condensing dimethylallyl diphosphate (DMAP) and tryptophan to form 4-dimethylallyl-L-tryptophan. The second step is catalyzed by the methyltransferase easF that methylates 4-dimethylallyl-L-tryptophan in the presence of S-adenosyl-L-methionine, resulting in the formation of 4-dimethylallyl-L-abrine. The catalase easC and the FAD-dependent oxidoreductase easE then transform 4-dimethylallyl-L-abrine to chanoclavine-I which is further oxidized by easD in the presence of NAD(+), resulting in the formation of chanoclavine-I aldehyde. Chanoclavine-I aldehyde is the precursor of ergoamides and ergopeptines in Clavicipitaceae, and clavine-type alcaloids such as fumiclavine in Trichocomaceae. However, the metabolites downstream of chanoclavine-I aldehyde in Arthrodermataceae have not been identified yet. The polypeptide is Catalase easC (Trichophyton verrucosum (strain HKI 0517)).